We begin with the raw amino-acid sequence, 36 residues long: Conotoxin Cl14.10 (36 aa).

Positions Asn-1–Glu-2 are excised as a propeptide.

Post-translationally, contains 2 disulfide bond. Expressed by the venom duct.

Its subcellular location is the secreted. The sequence is that of Conotoxin Cl14.10 from Californiconus californicus (California cone).